The following is a 378-amino-acid chain: MGQSKKLNKQPRSLSPLVLLSGISKSFDGKEVISQLDLTINNGEFLTLLGPSGCGKTTVLRLIAGLETVDAGHIMLDNQDITHVPAENRYVNTVFQSYALFPHMTVFENVAFGLRMQKTPAAEIAPRVTDALRMVQLEEFAQRKPHQLSGGQQQRVAIARAVVNKPRLLLLDESLSALDYKLRKQMQNELKALQRKLGITFVFVTHDQEEALTMSDRIVVMRNGVIEQDGTPREIYEEPKNLFVAGFIGEINRFDATVIERLDEQRVRASVEGRECNIYVNFAVEPGQKLNVLLRPEDLRVEEINDDNHIEGLIGYVRERNYKGMTLESVVELENGKMVMVSEFFNEDDPDFDHSLDQKMAISWVESWEVVLADEEHK.

One can recognise an ABC transporter domain in the interval 18–248 (VLLSGISKSF…PKNLFVAGFI (231 aa)). Position 50-57 (50-57 (GPSGCGKT)) interacts with ATP.

Belongs to the ABC transporter superfamily. Spermidine/putrescine importer (TC 3.A.1.11.1) family. As to quaternary structure, the complex is composed of two ATP-binding proteins (PotA), two transmembrane proteins (PotB and PotC) and a solute-binding protein (PotD).

The protein resides in the cell inner membrane. The enzyme catalyses ATP + H2O + polyamine-[polyamine-binding protein]Side 1 = ADP + phosphate + polyamineSide 2 + [polyamine-binding protein]Side 1.. Its function is as follows. Part of the ABC transporter complex PotABCD involved in spermidine/putrescine import. Responsible for energy coupling to the transport system. The protein is Spermidine/putrescine import ATP-binding protein PotA of Salmonella paratyphi A (strain ATCC 9150 / SARB42).